The primary structure comprises 424 residues: Enolase (424 aa).

Position 163 (Q163) interacts with (2R)-2-phosphoglycerate. The active-site Proton donor is the E204. Mg(2+)-binding residues include D241, E284, and D311. The (2R)-2-phosphoglycerate site is built by K336, R365, S366, and K387. Residue K336 is the Proton acceptor of the active site.

It belongs to the enolase family. The cofactor is Mg(2+).

The protein localises to the cytoplasm. The protein resides in the secreted. It is found in the cell surface. The catalysed reaction is (2R)-2-phosphoglycerate = phosphoenolpyruvate + H2O. The protein operates within carbohydrate degradation; glycolysis; pyruvate from D-glyceraldehyde 3-phosphate: step 4/5. In terms of biological role, catalyzes the reversible conversion of 2-phosphoglycerate (2-PG) into phosphoenolpyruvate (PEP). It is essential for the degradation of carbohydrates via glycolysis. This chain is Enolase, found in Dictyoglomus turgidum (strain DSM 6724 / Z-1310).